Consider the following 127-residue polypeptide: MSTPKDMRYSKEHEWVKVEDGKARIGITHFAQAELGDIVFVELPEVGAEIKADEPFGSVESVKTVSELYAPINGTVTEVNEDLDDSPEFVNESPYEKAWMIVVEPADAEEIENLMTSEQYDEMTQED.

The Lipoyl-binding domain maps to 22–104 (KARIGITHFA…YEKAWMIVVE (83 aa)). Lys63 carries the N6-lipoyllysine modification.

This sequence belongs to the GcvH family. In terms of assembly, the glycine cleavage system is composed of four proteins: P, T, L and H. (R)-lipoate serves as cofactor.

The glycine cleavage system catalyzes the degradation of glycine. The H protein shuttles the methylamine group of glycine from the P protein to the T protein. Its function is as follows. Is also involved in protein lipoylation via its role as an octanoyl/lipoyl carrier protein intermediate. This is Glycine cleavage system H protein from Bacillus velezensis (strain DSM 23117 / BGSC 10A6 / LMG 26770 / FZB42) (Bacillus amyloliquefaciens subsp. plantarum).